The chain runs to 458 residues: ATP synthase subunit beta (458 aa).

G148–T155 contributes to the ATP binding site.

Belongs to the ATPase alpha/beta chains family. As to quaternary structure, F-type ATPases have 2 components, CF(1) - the catalytic core - and CF(0) - the membrane proton channel. CF(1) has five subunits: alpha(3), beta(3), gamma(1), delta(1), epsilon(1). CF(0) has three main subunits: a(1), b(2) and c(9-12). The alpha and beta chains form an alternating ring which encloses part of the gamma chain. CF(1) is attached to CF(0) by a central stalk formed by the gamma and epsilon chains, while a peripheral stalk is formed by the delta and b chains.

The protein resides in the cell inner membrane. It carries out the reaction ATP + H2O + 4 H(+)(in) = ADP + phosphate + 5 H(+)(out). Its function is as follows. Produces ATP from ADP in the presence of a proton gradient across the membrane. The catalytic sites are hosted primarily by the beta subunits. The chain is ATP synthase subunit beta from Shewanella woodyi (strain ATCC 51908 / MS32).